Here is a 306-residue protein sequence, read N- to C-terminus: Nuclear egress protein 1 (306 aa).

Residues methionine 1 to arginine 49 form a disordered region. The CCCH-type zinc finger occupies cysteine 106 to histidine 225.

Belongs to the herpesviridae NEC1 protein family. As to quaternary structure, forms a heterohexameric complex with NEC2. Interacts with capsid vertex specific component 2/CVC2; this interaction directs the capsid to the host inner nuclear membrane to initiate budding. Post-translationally, phosphorylated at serine residues in the N-terminus. This phosphorylation regulates the localization within the inner nuclear membrane.

It localises to the host nucleus inner membrane. In terms of biological role, plays an essential role in virion nuclear egress, the first step of virion release from infected cell. Within the host nucleus, NEC1 interacts with the newly formed capsid through the vertexes and directs it to the inner nuclear membrane by associating with NEC2. Induces the budding of the capsid at the inner nuclear membrane as well as its envelopment into the perinuclear space. There, the NEC1/NEC2 complex promotes the fusion of the enveloped capsid with the outer nuclear membrane and the subsequent release of the viral capsid into the cytoplasm where it will reach the secondary budding sites in the host Golgi or trans-Golgi network. The sequence is that of Nuclear egress protein 1 from Human herpesvirus 1 (strain 17) (HHV-1).